The primary structure comprises 217 residues: UPF0111 protein MTH_1689 (217 aa).

The protein belongs to the UPF0111 family.

The sequence is that of UPF0111 protein MTH_1689 from Methanothermobacter thermautotrophicus (strain ATCC 29096 / DSM 1053 / JCM 10044 / NBRC 100330 / Delta H) (Methanobacterium thermoautotrophicum).